The chain runs to 784 residues: Probable phosphoketolase (784 aa).

It belongs to the XFP family. It depends on thiamine diphosphate as a cofactor.

The sequence is that of Probable phosphoketolase from Rhodopseudomonas palustris (strain BisB5).